Reading from the N-terminus, the 598-residue chain is MATQPLSTSLVRFLTAAVSESIRRASEAGQLGSLTLEQAAGVAPTIQIPSDPRYGDYACPTPLGMAKLCRMAPAQIAQTLQKHLDLPGIATEVAGGGYLNFRLGDSFLAERLQELLRLGEDFGKTAAPHPERILLEYVSANPTGPLHVGHGRWAAVGSTLANLLRWTGHQVEREFYINDAGNQMRLLGQSLEVRVRQLQGEEVALPEDAYHGSYLVDIARRLLDQVKAGIRPLPTTPEEYTDFAYAEMLAWQKQTLQQLRTEFDHWFSERRLHAPDPQTGLSAIQQALQELQERGFLYRAKAPRGEDPKPGAEEAVYFKTQEFGDDKDRVVQKADGSFTYLAADIAYHRDKVRRGYQRLINILGSDHHGYIGRLHAAVGAFSPDVKLEILIGQFVKLFKTDPETGEKTEVRMSKRTGNFVSLNDLIDDPEIGVGVDAARWFLLSSSMDSPINFDLDLAVKQTFDNPVVYVHYSHARCCTLLRRLQEEEKVELTNKVTLTEQQKLPYQEPEERALLLRLLALPDELIAAAEERAPHKIIRYAEAIAADFNKFYDNCRILPLLKEDPLLAQARIQLVQATRQVLFNVLTGILGLSAPESM.

The 'HIGH' region signature appears at 140–150 (ANPTGPLHVGH).

This sequence belongs to the class-I aminoacyl-tRNA synthetase family. As to quaternary structure, monomer.

The protein resides in the cytoplasm. The catalysed reaction is tRNA(Arg) + L-arginine + ATP = L-arginyl-tRNA(Arg) + AMP + diphosphate. In Synechococcus sp. (strain JA-3-3Ab) (Cyanobacteria bacterium Yellowstone A-Prime), this protein is Arginine--tRNA ligase.